Consider the following 462-residue polypeptide: L-seryl-tRNA(Sec) selenium transferase (462 aa).

N6-(pyridoxal phosphate)lysine is present on Lys-293.

This sequence belongs to the SelA family. Pyridoxal 5'-phosphate is required as a cofactor.

It localises to the cytoplasm. It carries out the reaction L-seryl-tRNA(Sec) + selenophosphate + H(+) = L-selenocysteinyl-tRNA(Sec) + phosphate. The protein operates within aminoacyl-tRNA biosynthesis; selenocysteinyl-tRNA(Sec) biosynthesis; selenocysteinyl-tRNA(Sec) from L-seryl-tRNA(Sec) (bacterial route): step 1/1. Converts seryl-tRNA(Sec) to selenocysteinyl-tRNA(Sec) required for selenoprotein biosynthesis. The protein is L-seryl-tRNA(Sec) selenium transferase of Clostridium botulinum (strain ATCC 19397 / Type A).